The chain runs to 296 residues: Uricase (296 aa).

Residues K14 and T61 each act as charge relay system in the active site. Residues T61, D62, F163, R180, V229, Q230, and N256 each contribute to the urate site. Residue H258 is the Charge relay system of the active site.

The protein belongs to the uricase family.

It localises to the peroxisome. The protein resides in the cytoplasm. The protein localises to the nucleus. It carries out the reaction urate + O2 + H2O = 5-hydroxyisourate + H2O2. Its pathway is purine metabolism; urate degradation; (S)-allantoin from urate: step 1/3. In terms of biological role, catalyzes the oxidation of uric acid to 5-hydroxyisourate, which is further processed to form (S)-allantoin. In Schizosaccharomyces pombe (strain 972 / ATCC 24843) (Fission yeast), this protein is Uricase.